A 519-amino-acid chain; its full sequence is NADH-quinone oxidoreductase subunit N (519 aa).

Helical transmembrane passes span 14 to 34 (LLPA…EVFL), 44 to 64 (AVLT…TMFE), 82 to 102 (FLTF…VSFL), 117 to 137 (LFAS…TLFV), 167 to 187 (FILG…LYGA), 209 to 229 (GLVY…VAAV), 249 to 269 (LMSV…FFMV), 278 to 298 (LLGL…LLAI), 307 to 327 (LAYS…ALFV), 359 to 379 (ILYY…IVSV), 407 to 427 (WAFA…TIGF), 431 to 451 (LLIF…VGVL), and 487 to 507 (LALV…GPIM).

This sequence belongs to the complex I subunit 2 family. In terms of assembly, NDH-1 is composed of 14 different subunits. Subunits NuoA, H, J, K, L, M, N constitute the membrane sector of the complex.

It localises to the cell inner membrane. The catalysed reaction is a quinone + NADH + 5 H(+)(in) = a quinol + NAD(+) + 4 H(+)(out). Its function is as follows. NDH-1 shuttles electrons from NADH, via FMN and iron-sulfur (Fe-S) centers, to quinones in the respiratory chain. The immediate electron acceptor for the enzyme in this species is believed to be ubiquinone. Couples the redox reaction to proton translocation (for every two electrons transferred, four hydrogen ions are translocated across the cytoplasmic membrane), and thus conserves the redox energy in a proton gradient. This is NADH-quinone oxidoreductase subunit N from Myxococcus xanthus (strain DK1622).